The chain runs to 72 residues: MAKDDVIEVEGTVVETLPNAMFKVELENGHTVLAHVSGKIRMHFIRILPGDKVTVELSPYDLTRGRITYRYK.

Residues 1–72 (MAKDDVIEVE…TRGRITYRYK (72 aa)) form the S1-like domain. A Phosphotyrosine modification is found at Tyr60.

This sequence belongs to the IF-1 family. Component of the 30S ribosomal translation pre-initiation complex which assembles on the 30S ribosome in the order IF-2 and IF-3, IF-1 and N-formylmethionyl-tRNA(fMet); mRNA recruitment can occur at any time during PIC assembly.

The protein resides in the cytoplasm. In terms of biological role, one of the essential components for the initiation of protein synthesis. Stabilizes the binding of IF-2 and IF-3 on the 30S subunit to which N-formylmethionyl-tRNA(fMet) subsequently binds. Helps modulate mRNA selection, yielding the 30S pre-initiation complex (PIC). Upon addition of the 50S ribosomal subunit IF-1, IF-2 and IF-3 are released leaving the mature 70S translation initiation complex. This Bacillus licheniformis (strain ATCC 14580 / DSM 13 / JCM 2505 / CCUG 7422 / NBRC 12200 / NCIMB 9375 / NCTC 10341 / NRRL NRS-1264 / Gibson 46) protein is Translation initiation factor IF-1.